A 368-amino-acid chain; its full sequence is Spermidine/putrescine import ATP-binding protein PotA (368 aa).

Residues 8 to 238 enclose the ABC transporter domain; it reads IELRGVTKNF…PANLYVARFV (231 aa). Residue 40–47 coordinates ATP; it reads GPSGCGKT.

This sequence belongs to the ABC transporter superfamily. Spermidine/putrescine importer (TC 3.A.1.11.1) family. The complex is composed of two ATP-binding proteins (PotA), two transmembrane proteins (PotB and PotC) and a solute-binding protein (PotD).

The protein localises to the cell inner membrane. The catalysed reaction is ATP + H2O + polyamine-[polyamine-binding protein]Side 1 = ADP + phosphate + polyamineSide 2 + [polyamine-binding protein]Side 1.. Functionally, part of the ABC transporter complex PotABCD involved in spermidine/putrescine import. Responsible for energy coupling to the transport system. The sequence is that of Spermidine/putrescine import ATP-binding protein PotA from Nitratidesulfovibrio vulgaris (strain ATCC 29579 / DSM 644 / CCUG 34227 / NCIMB 8303 / VKM B-1760 / Hildenborough) (Desulfovibrio vulgaris).